Consider the following 395-residue polypeptide: Proteinase-activated receptor 2 (395 aa).

The N-terminal stretch at 1–25 (MRSPSAAWLLGGVLLLAASGSCNRT) is a signal peptide. N-linked (GlcNAc...) asparagine glycans are attached at residues Asn23 and Asn29. The propeptide at 26-34 (VPGNKSKGR) is removed for receptor activation. At 35–69 (SLIGNVDNSPVVAGRGVTVKPGFSVDEFSTSVLTG) the chain is on the extracellular side. The helical transmembrane segment at 70-99 (KLTTVFLPVVYTIVFVVGLPSNGMALWVFL) threads the bilayer. Residues 100–106 (FRTKKKH) lie on the Cytoplasmic side of the membrane. Residues 107 to 135 (PAVIYMANLALADLLSVTWFPLKIAYHIH) traverse the membrane as a helical segment. Residues 136 to 147 (GNNWIYGESLCK) are Extracellular-facing. Cys146 and Cys224 are disulfide-bonded. Residues 148 to 175 (VLIGFFYGNMYCSILFMTCLSVQRYWVI) form a helical membrane-spanning segment. At 176-181 (VNPMVH) the chain is on the cytoplasmic side. Residues 182 to 209 (PKKQANIAIGVSLGIWLLILLLTIPLYV) traverse the membrane as a helical segment. Topologically, residues 210–233 (VKQTSYIRALNITTCHDVLPEEVL) are extracellular. The N-linked (GlcNAc...) asparagine glycan is linked to Asn220. Residues 234 to 267 (VGDMFNYFLSLAIGVFLFPAFLTASAYVLMIRTL) form a helical membrane-spanning segment. At 268-275 (QSSAMDES) the chain is on the cytoplasmic side. A helical membrane pass occupies residues 276-315 (SGKKRRRAIKLIVTVLAMYLICFTPSNLLLVVHYFLIKTR). Residues 316–321 (GQSHVY) are Extracellular-facing. Residues 322 to 345 (ALYIVALCLSTLNSCIDPFVYYFI) form a helical membrane-spanning segment. The Cytoplasmic portion of the chain corresponds to 346–395 (SQDFRDHAKNALLCRSVRTVKRMQVSLSSKKFSGKSSSYSSSSTSVKGSY). The S-palmitoyl cysteine moiety is linked to residue Cys359.

This sequence belongs to the G-protein coupled receptor 1 family. In terms of assembly, interacts with TLR4, COPS5 and TMED2. Interacts with GNAQ, GNA11, GNA12, GNA13 and GNA14. In terms of processing, a proteolytic cleavage generates a new N-terminus that functions as a tethered ligand. Activating serine proteases include trypsin, mast cell tryptase, coagulation factors VII and Xa, myeloblastin/PRTN3 and membrane-type serine protease 1/ST14. Proposed subsequent cleavage by serine proteases is leading to receptor deactivation and include neutrophil elastase and cathepsin G. At least in part, implicated proteases are also shown to activate the receptor; the glycosylation status of the receptor is thought to contribute to the difference. N-glycosylated and sialylated. Post-translationally, multiple phosphorylated on serine and threonine residues in the cytoplasmic region upon receptor activation; required for receptor desensitization and recruitment of beta-arrestin. In terms of processing, monoubiquitinated by CBL at the plasma membrane and in early endosomes; not required for receptor endocytosis but for translocation to late endosomes or lysosomes. Deubiquitination involves STAMBP and USP8; required for lysosomal trafficking and receptor degradation.

It localises to the cell membrane. Functionally, receptor for trypsin and trypsin-like enzymes coupled to G proteins. Its function is mediated through the activation of several signaling pathways including phospholipase C (PLC), intracellular calcium, mitogen-activated protein kinase (MAPK), I-kappaB kinase/NF-kappaB and Rho. Can also be transactivated by cleaved F2R/PAR1. Involved in modulation of inflammatory responses and regulation of innate and adaptive immunity, and acts as a sensor for proteolytic enzymes generated during infection. Generally is promoting inflammation. Can signal synergistically with TLR4 and probably TLR2 in inflammatory responses and modulates TLR3 signaling. Has a protective role in establishing the endothelial barrier; the activity involves coagulation factor X. Regulates endothelial cell barrier integrity during neutrophil extravasation, probably following proteolytic cleavage by PRTN3. Proposed to have a bronchoprotective role in airway epithelium, but also shown to compromise the airway epithelial barrier by interrupting E-cadherin adhesion. Involved in the regulation of vascular tone; activation results in hypotension presumably mediated by vasodilation. Associates with a subset of G proteins alpha subunits such as GNAQ, GNA11, GNA14, GNA12 and GNA13, but probably not with G(o) alpha, G(i) subunit alpha-1 and G(i) subunit alpha-2. Believed to be a class B receptor which internalizes as a complex with arrestin and traffic with it to endosomal vesicles, presumably as desensitized receptor, for extended periods of time. Mediates inhibition of TNF-alpha stimulated JNK phosphorylation via coupling to GNAQ and GNA11; the function involves dissociation of RIPK1 and TRADD from TNFR1. Mediates phosphorylation of nuclear factor NF-kappa-B RELA subunit at 'Ser-536'; the function involves IKBKB and is predominantly independent of G proteins. Involved in cellular migration. Involved in cytoskeletal rearrangement and chemotaxis through beta-arrestin-promoted scaffolds; the function is independent of GNAQ and GNA11 and involves promotion of cofilin dephosphorylation and actin filament severing. Induces redistribution of COPS5 from the plasma membrane to the cytosol and activation of the JNK cascade is mediated by COPS5. Involved in the recruitment of leukocytes to the sites of inflammation and is the major PAR receptor capable of modulating eosinophil function such as pro-inflammatory cytokine secretion, superoxide production and degranulation. During inflammation promotes dendritic cell maturation, trafficking to the lymph nodes and subsequent T-cell activation. Involved in antimicrobial response of innate immune cells; activation enhances phagocytosis of Gram-positive and killing of Gram-negative bacteria. Acts synergistically with interferon-gamma in enhancing antiviral responses. Probably mediates activation of pro-inflammatory and pro-fibrotic responses in fibroblasts, triggered by coagulation factor Xa (F10). Probably mediates activation of barrier protective signaling responses in endothelial cells, triggered by coagulation factor Xa (F10). This is Proteinase-activated receptor 2 (F2RL1) from Bos taurus (Bovine).